A 262-amino-acid polypeptide reads, in one-letter code: Spindlin-W (262 aa).

Residues 1–49 form a disordered region; that stretch reads MKTPFGKSPAQRSRADAGHTRVSASMMKKRTSHKKHRNNVGPSKPISQP. Residues 27–38 show a composition bias toward basic residues; it reads MKKRTSHKKHRN.

The protein belongs to the SPIN/STSY family. In terms of tissue distribution, expressed predominantly in ovarian granulosa and thecal cell.

It localises to the nucleus. Its function is as follows. May play a role in mitosis. This Gallus gallus (Chicken) protein is Spindlin-W (SPINW).